A 147-amino-acid chain; its full sequence is Pathogenesis-related protein PR-4B (147 aa).

The N-terminal stretch at 1 to 25 is a signal peptide; the sequence is MERVNNYKLCVALLIMSVMMAMAAA. One can recognise a Barwin domain in the interval 26–147; sequence QSATNVRSTY…VNYEFVNCND (122 aa). Disulfide bonds link cysteine 54/cysteine 86, cysteine 75/cysteine 109, and cysteine 89/cysteine 145.

It is found in the secreted. The protein resides in the cell wall. The protein is Pathogenesis-related protein PR-4B of Nicotiana tabacum (Common tobacco).